The following is a 551-amino-acid chain: Tetrachloroethene reductive dehalogenase (551 aa).

The segment at residues 1 to 39 (MGEINRRNFLKVSILGAAAAAVASASAVKGMVSPLVADA) is a signal peptide (tat-type signal). The 4Fe-4S ferredoxin-type 1 domain maps to 411–440 (PRKFGVREFCRLCKKCADACPAQAISHEKD). Cys-420, Cys-423, Cys-426, Cys-430, Cys-467, Cys-478, Cys-481, and Cys-485 together coordinate [4Fe-4S] cluster. The 4Fe-4S ferredoxin-type 2 domain occupies 478-496 (CSNCVAVCSWNKVETWNHD).

This sequence belongs to the PceA family. Requires [4Fe-4S] cluster as cofactor. Corrinoid is required as a cofactor. Post-translationally, predicted to be exported by the Tat system. The position of the signal peptide cleavage has not been experimentally proven.

It is found in the cell membrane. The catalysed reaction is trichloroethene + chloride + A + H(+) = tetrachloroethene + AH2. It carries out the reaction trichloroethene + AH2 = (Z)-1,2-dichloroethene + chloride + A + H(+). In terms of biological role, catalyzes the reductive dechlorination of tetrachloroethene (PCE) to trichloroethene (TCE) and of trichloroethene to cis-1,2-dichloroethene (DCE). The polypeptide is Tetrachloroethene reductive dehalogenase (Desulfitobacterium hafniense (Desulfitobacterium frappieri)).